The following is a 292-amino-acid chain: Ribonuclease Z (292 aa).

Zn(2+) is bound by residues His60, His62, Asp64, His65, His132, Asp200, and His256. Asp64 acts as the Proton acceptor in catalysis.

This sequence belongs to the RNase Z family. In terms of assembly, homodimer. It depends on Zn(2+) as a cofactor.

The catalysed reaction is Endonucleolytic cleavage of RNA, removing extra 3' nucleotides from tRNA precursor, generating 3' termini of tRNAs. A 3'-hydroxy group is left at the tRNA terminus and a 5'-phosphoryl group is left at the trailer molecule.. In terms of biological role, zinc phosphodiesterase, which displays some tRNA 3'-processing endonuclease activity. Probably involved in tRNA maturation, by removing a 3'-trailer from precursor tRNA. The polypeptide is Ribonuclease Z (Sulfolobus acidocaldarius (strain ATCC 33909 / DSM 639 / JCM 8929 / NBRC 15157 / NCIMB 11770)).